The following is a 450-amino-acid chain: MFGRESADLAKKYFESLRKKAADKRFARYEGSAASETPSATGPLLRGGHEELNRGCANAARDGFELAAQPEPRRVTGFQFAVDVSQRFQACIPPVGSLHSCCAASCMFAFAASEALYETLVADSLEAARLKVGAEYKNLANDSGASDGEMAPPRPDSMLGGLRGALDELAFAQYSNADAEAHERVYDGVMAGYSDMICSDEFAQLSDFVFRFAALLKTSFKGTTGAGRGAYYVSPGSNKRRRLNRGNSSRNGYRPREGRLELFQKMILMHATYFAACITLDDESTERMDRYLAEVFNTPLFSSPALHHFKQRTSVFLVPRRHGKTWFLVPLISLLVSCFEGLRIGYTAHLRKATKPVFEEIYARLCRWYGEDRVHQIKGETIAFSFKNGARSSIVFASSQNTNVSIRQLLYGVAAKARCGIDDANGRVSELAFYFCSHGAPLNFLLLSAP.

This sequence belongs to the herpesviridae large terminase family.

This Psittacid herpesvirus 1 (isolate Amazon parrot/-/97-0001/1997) (PsHV-1) protein is Large terminase protein homolog UL15b (UL15b).